The chain runs to 616 residues: MPKYRSATTTHGRNMAGARALWRATGMTDADFGKPIIAVVNSFTQFVPGHVHLRDLGKLVAEQIEAAGGVAKEFNTIAVDDGIAMGHGGMLYSLPSRELIADSVEYMVNAHCADAMVCISNCDKITPGMLMASLRLNIPVIFVSGGPMEAGKTKLSDQIIKLDLVDAMIQGADPKVSDSQSDQVERSACPTCGSCSGMFTANSMNCLTEALGLSQPGNGSLLATHADRKQLFLNAGKRIVELTKRYYEQDDESALPRNIASKAAFENAMTLDIAMGGSTNTVLHLLAAAQEAEIDFTMSDIDKLSRKVPQLCKVAPSTQKYHMEDVHRAGGVIGILGELDRAGLLNRDVKNVLGLTLPQTLEQYDIIVTQDDAVKNMFRAGPAGIRTTQAFSQDCRWDTLDDDRSNGCIRSLEHAYSKDGGLAVLYGNFAENGCIVKTAGVDDSILKFTGPAKVYESQDDAVEAILGGKVVAGDVVVIRYEGPKGGPGMQEMLYPTSFLKSMGLGKACALITDGRFSGGTSGLSIGHVSPEAASGGSIGLIEDGDLIAIDIPNRGIQLQVSDAELAARREAQEARGDKAWTPKNRERQVSFALRAYASLATSADKGAVRDKSKLGG.

Residue aspartate 81 participates in Mg(2+) binding. Cysteine 122 lines the [2Fe-2S] cluster pocket. The Mg(2+) site is built by aspartate 123 and lysine 124. The residue at position 124 (lysine 124) is an N6-carboxylysine. Cysteine 195 contributes to the [2Fe-2S] cluster binding site. A Mg(2+)-binding site is contributed by glutamate 491. Serine 517 (proton acceptor) is an active-site residue.

Belongs to the IlvD/Edd family. In terms of assembly, homodimer. [2Fe-2S] cluster is required as a cofactor. Mg(2+) serves as cofactor.

It catalyses the reaction (2R)-2,3-dihydroxy-3-methylbutanoate = 3-methyl-2-oxobutanoate + H2O. It carries out the reaction (2R,3R)-2,3-dihydroxy-3-methylpentanoate = (S)-3-methyl-2-oxopentanoate + H2O. It participates in amino-acid biosynthesis; L-isoleucine biosynthesis; L-isoleucine from 2-oxobutanoate: step 3/4. It functions in the pathway amino-acid biosynthesis; L-valine biosynthesis; L-valine from pyruvate: step 3/4. Functions in the biosynthesis of branched-chain amino acids. Catalyzes the dehydration of (2R,3R)-2,3-dihydroxy-3-methylpentanoate (2,3-dihydroxy-3-methylvalerate) into 2-oxo-3-methylpentanoate (2-oxo-3-methylvalerate) and of (2R)-2,3-dihydroxy-3-methylbutanoate (2,3-dihydroxyisovalerate) into 2-oxo-3-methylbutanoate (2-oxoisovalerate), the penultimate precursor to L-isoleucine and L-valine, respectively. In Escherichia coli O1:K1 / APEC, this protein is Dihydroxy-acid dehydratase.